The chain runs to 81 residues: MNPLVFAASVIAAGLAVGLASIGPGVGQGTAAGQAVEGIARQPEAEGKIRGTLLLSLAFMEALTIYGLVVALALLFANPFV.

A run of 2 helical transmembrane segments spans residues 3–23 (PLVF…ASIG) and 57–77 (LAFM…LLFA).

It belongs to the ATPase C chain family. In terms of assembly, F-type ATPases have 2 components, F(1) - the catalytic core - and F(0) - the membrane proton channel. F(1) has five subunits: alpha(3), beta(3), gamma(1), delta(1), epsilon(1). F(0) has four main subunits: a(1), b(1), b'(1) and c(10-14). The alpha and beta chains form an alternating ring which encloses part of the gamma chain. F(1) is attached to F(0) by a central stalk formed by the gamma and epsilon chains, while a peripheral stalk is formed by the delta, b and b' chains.

It localises to the plastid. The protein localises to the chloroplast thylakoid membrane. In terms of biological role, f(1)F(0) ATP synthase produces ATP from ADP in the presence of a proton or sodium gradient. F-type ATPases consist of two structural domains, F(1) containing the extramembraneous catalytic core and F(0) containing the membrane proton channel, linked together by a central stalk and a peripheral stalk. During catalysis, ATP synthesis in the catalytic domain of F(1) is coupled via a rotary mechanism of the central stalk subunits to proton translocation. Key component of the F(0) channel; it plays a direct role in translocation across the membrane. A homomeric c-ring of between 10-14 subunits forms the central stalk rotor element with the F(1) delta and epsilon subunits. The chain is ATP synthase subunit c, chloroplastic from Atropa belladonna (Belladonna).